A 118-amino-acid polypeptide reads, in one-letter code: Eukaryotic translation initiation factor 4E-binding protein 1 (118 aa).

Ser-2 is modified (N-acetylserine). The disordered stretch occupies residues 27–48 (VQLPPGDYSTTPGGTLFSTTPG). A compositionally biased stretch (polar residues) spans 34–48 (YSTTPGGTLFSTTPG). Thr-37 carries the post-translational modification Phosphothreonine; by MTOR. Position 41 is a phosphothreonine (Thr-41). At Ser-44 the chain carries Phosphoserine. The residue at position 46 (Thr-46) is a Phosphothreonine; by MTOR. Position 50 is a phosphothreonine (Thr-50). A Phosphotyrosine modification is found at Tyr-54. A YXXXXLphi motif motif is present at residues 54-60 (YDRKFLM). Lys-57 participates in a covalent cross-link: Glycyl lysine isopeptide (Lys-Gly) (interchain with G-Cter in ubiquitin). Positions 64–118 (NSPVTKTPPRDLPTIPGVTSPTGDEPPTEARQNHLRSSPEDKPAGGEESQFEMDI) are disordered. The residue at position 65 (Ser-65) is a Phosphoserine; by DYRK2, MAPK1, MAPK3 and MTOR. Phosphothreonine; by MTOR is present on Thr-70. At Thr-77 the chain carries Phosphothreonine. Phosphoserine is present on residues Ser-83 and Ser-100. The residue at position 101 (Ser-101) is a Phosphoserine; by DYRK2. Ser-112 bears the Phosphoserine mark. A TOS motif motif is present at residues 114 to 118 (FEMDI).

It belongs to the eIF4E-binding protein family. As to quaternary structure, hypophosphorylated EIF4EBP1 competes with EIF4G1/EIF4G3 to interact with EIF4E; insulin stimulated MAP-kinase (MAPK1 and MAPK3) or mTORC1 phosphorylation of EIF4EBP1 causes dissociation of the complex allowing EIF4G1/EIF4G3 to bind and consequent initiation of translation. Interacts (via TOS motif) with RPTOR; promoting phosphorylation by mTORC1. In terms of processing, phosphorylated on serine and threonine residues in response to insulin, EGF and PDGF. Phosphorylation at Thr-37, Thr-46, Ser-65 and Thr-70, corresponding to the hyperphosphorylated form, is regulated by mTORC1 and abolishes binding to EIF4E. Post-translationally, ubiquitinated: when eIF4E levels are low, hypophosphorylated form is ubiquitinated by the BCR(KLHL25) complex, leading to its degradation and serving as a homeostatic mechanism to maintain translation and prevent eIF4E inhibition when eIF4E levels are low. Not ubiquitinated when hyperphosphorylated (at Thr-37, Thr-46, Ser-65 and Thr-70) or associated with eIF4E.

It is found in the cytoplasm. Its subcellular location is the nucleus. Functionally, repressor of translation initiation that regulates EIF4E activity by preventing its assembly into the eIF4F complex: hypophosphorylated form competes with EIF4G1/EIF4G3 and strongly binds to EIF4E, leading to repress translation. In contrast, hyperphosphorylated form dissociates from EIF4E, allowing interaction between EIF4G1/EIF4G3 and EIF4E, leading to initiation of translation. Mediates the regulation of protein translation by hormones, growth factors and other stimuli that signal through the MAP kinase and mTORC1 pathways. In Bos taurus (Bovine), this protein is Eukaryotic translation initiation factor 4E-binding protein 1 (EIF4EBP1).